The sequence spans 165 residues: Small ribosomal subunit protein uS5 (165 aa).

The region spanning 13–76 (LEEKVLVVNR…EAAKKNLMKI (64 aa)) is the S5 DRBM domain.

Belongs to the universal ribosomal protein uS5 family. As to quaternary structure, part of the 30S ribosomal subunit. Contacts proteins S4 and S8.

Its function is as follows. With S4 and S12 plays an important role in translational accuracy. In terms of biological role, located at the back of the 30S subunit body where it stabilizes the conformation of the head with respect to the body. This Chlamydia pneumoniae (Chlamydophila pneumoniae) protein is Small ribosomal subunit protein uS5.